A 308-amino-acid polypeptide reads, in one-letter code: MESAKSAAALVEPCQTNSARRLTEDDSLRVSVLSEALPYIQRFSGRRIVIKYGGAAMAHANLQEAVFRDLALLVSVGVEPVVVHGGGPEINQWLERLEIPAKFRDGLRVTDADTMDVVEMVLVGRVNKQIVNGLNQLGAKAVGLSGSDGSLVEARPWGDGSHGLVGDVARVNTDVLEPILAKGYVPVISSVAATVEGCSHNINADTVAGEIAAALEAEKLILLTDTPGILLDRDDPSSLVHQLRLSEARQLIAEGVVAGGMTPKTECCIRALAQGVGAAHIIDGRVPHALLLEVFTDAGIGTMVVGRS.

Residues 86-87 (GG), Arg-108, and Asn-201 contribute to the substrate site.

It belongs to the acetylglutamate kinase family. ArgB subfamily.

The protein localises to the cytoplasm. It carries out the reaction N-acetyl-L-glutamate + ATP = N-acetyl-L-glutamyl 5-phosphate + ADP. The protein operates within amino-acid biosynthesis; L-arginine biosynthesis; N(2)-acetyl-L-ornithine from L-glutamate: step 2/4. Its function is as follows. Catalyzes the ATP-dependent phosphorylation of N-acetyl-L-glutamate. The protein is Acetylglutamate kinase of Prochlorococcus marinus (strain MIT 9303).